The following is a 251-amino-acid chain: Auxin-responsive protein IAA29 (251 aa).

Positions 3–7 (LDLGL) match the EAR-like (transcriptional repression) motif. Residues 159–246 (SMYVKVKMDG…SIIRDRPCAY (88 aa)) enclose the PB1 domain.

The protein belongs to the Aux/IAA family. In terms of assembly, homodimers and heterodimers.

It is found in the nucleus. In terms of biological role, aux/IAA proteins are short-lived transcriptional factors that function as repressors of early auxin response genes at low auxin concentrations. Repression is thought to result from the interaction with auxin response factors (ARFs), proteins that bind to the auxin-responsive promoter element (AuxRE). Formation of heterodimers with ARF proteins may alter their ability to modulate early auxin response genes expression. The chain is Auxin-responsive protein IAA29 (IAA29) from Arabidopsis thaliana (Mouse-ear cress).